The sequence spans 137 residues: Basic phospholipase A2 homolog Ts-R6 (137 aa).

Positions 1-16 are cleaved as a signal peptide; the sequence is MRTLWIMAVLLLGVEG. Disulfide bonds link Cys-42/Cys-130, Cys-44/Cys-60, Cys-59/Cys-110, Cys-65/Cys-137, Cys-66/Cys-103, Cys-73/Cys-97, and Cys-91/Cys-101.

Expressed by the venom gland.

Its subcellular location is the secreted. Its function is as follows. Snake venom phospholipase A2 homolog that induces local edema a few hours after injection (5-10 ug) in the hind paw and shows weak anticoagulant and myotoxic activities. In Trimeresurus stejnegeri (Chinese green tree viper), this protein is Basic phospholipase A2 homolog Ts-R6.